The chain runs to 179 residues: Large ribosomal subunit protein uL5 (179 aa).

Belongs to the universal ribosomal protein uL5 family. In terms of assembly, part of the 50S ribosomal subunit; part of the 5S rRNA/L5/L18/L25 subcomplex. Contacts the 5S rRNA and the P site tRNA. Forms a bridge to the 30S subunit in the 70S ribosome.

Functionally, this is one of the proteins that bind and probably mediate the attachment of the 5S RNA into the large ribosomal subunit, where it forms part of the central protuberance. In the 70S ribosome it contacts protein S13 of the 30S subunit (bridge B1b), connecting the 2 subunits; this bridge is implicated in subunit movement. Contacts the P site tRNA; the 5S rRNA and some of its associated proteins might help stabilize positioning of ribosome-bound tRNAs. The sequence is that of Large ribosomal subunit protein uL5 from Thiobacillus denitrificans (strain ATCC 25259 / T1).